A 56-amino-acid polypeptide reads, in one-letter code: Alpha-conotoxin TxIA (56 aa).

A signal peptide spans 1 to 16 (MFTVFLLVVLATAVVS). A propeptide spanning residues 17 to 39 (FTSDRASDDGKAAASDLITLTIK) is cleaved from the precursor. Disulfide bonds link Cys41–Cys47 and Cys42–Cys55. A ser-Xaa-Pro motif, crucial for potent interaction with nAChR region spans residues 43-45 (SRP). Residues Pro45 and Pro46 each carry the 4-hydroxyproline; partial modification. Cys55 carries the cysteine amide modification.

It belongs to the conotoxin A superfamily. In terms of processing, exists in 4 different forms, depending on hydroxylations. Tx1a-PP does not contain hydroxyproline, tx1a-OP has one hydroxyproline at position 45, tx1a-PO has one hydroxyproline at position 46, and tx1a-PP has two hydroxyprolines at positions 45 and 46. As to expression, expressed by the venom duct. Tx1a that containing 1 or 2 non-hydroxylated prolines are mostly present in part 5 of the venom duct (distal part near the pharynx), whereas tx1a-OO (with 2 hydroxyprolines) is mostly present in part 4 of the venom duct (follewed by part 3).

It localises to the secreted. Alpha-conotoxins act on postsynaptic membranes, they bind to the nicotinic acetylcholine receptors (nAChR) and thus inhibit them. This toxin inhibits rat alpha-3-beta-2/CHRNA3-CHRNB2 (IC(50)=3.5 nM), rat alpha-7/CHRNA7 (IC(50)=392 nM) nAChR, and the L.stagnalis soluble acetylcholine receptor (all tested without hydroxyproline). In Conus textile (Cloth-of-gold cone), this protein is Alpha-conotoxin TxIA.